A 75-amino-acid chain; its full sequence is Small ribosomal subunit protein bS18c (75 aa).

This sequence belongs to the bacterial ribosomal protein bS18 family. In terms of assembly, part of the 30S ribosomal subunit.

It is found in the plastid. The protein resides in the chloroplast. The chain is Small ribosomal subunit protein bS18c from Psilotum nudum (Whisk fern).